The sequence spans 954 residues: Protein translocase subunit SecA (954 aa).

ATP contacts are provided by residues Q86, G104–T108, and D494. Residues L520 to K549 are disordered.

Belongs to the SecA family. In terms of assembly, monomer and homodimer. Part of the essential Sec protein translocation apparatus which comprises SecA, SecYEG and auxiliary proteins SecDF. Other proteins may also be involved.

It is found in the cell inner membrane. The protein localises to the cellular thylakoid membrane. Its subcellular location is the cytoplasm. The enzyme catalyses ATP + H2O + cellular proteinSide 1 = ADP + phosphate + cellular proteinSide 2.. Its function is as follows. Part of the Sec protein translocase complex. Interacts with the SecYEG preprotein conducting channel. Has a central role in coupling the hydrolysis of ATP to the transfer of proteins into and across the cell membrane, serving as an ATP-driven molecular motor driving the stepwise translocation of polypeptide chains across the membrane. In terms of biological role, probably participates in protein translocation into and across both the cytoplasmic and thylakoid membranes in cyanobacterial cells. In Synechococcus sp. (strain JA-3-3Ab) (Cyanobacteria bacterium Yellowstone A-Prime), this protein is Protein translocase subunit SecA.